A 509-amino-acid chain; its full sequence is Sorting nexin MVP1 (509 aa).

The segment covering 1–25 (MDTYSGQNGWADTSNASPWGDTNDT) has biased composition (polar residues). The tract at residues 1-28 (MDTYSGQNGWADTSNASPWGDTNDTMPI) is disordered. One can recognise a PX domain in the interval 126-245 (QLDIISIEEI…TFLTVPTDLT (120 aa)). Positions 170, 172, 196, and 211 each coordinate a 1,2-diacyl-sn-glycero-3-phospho-(1D-myo-inositol-3-phosphate).

The protein belongs to the sorting nexin family.

The protein localises to the cytoplasm. The protein resides in the membrane. Functionally, required for vacuolar protein sorting. This chain is Sorting nexin MVP1 (MVP1), found in Candida glabrata (strain ATCC 2001 / BCRC 20586 / JCM 3761 / NBRC 0622 / NRRL Y-65 / CBS 138) (Yeast).